The primary structure comprises 253 residues: Glucosamine-6-phosphate deaminase (253 aa).

The active-site Proton acceptor; for enolization step is the Asp67. Residue Asn136 is the For ring-opening step of the active site. His138 serves as the catalytic Proton acceptor; for ring-opening step. Glu143 functions as the For ring-opening step in the catalytic mechanism.

The protein belongs to the glucosamine/galactosamine-6-phosphate isomerase family. NagB subfamily.

It catalyses the reaction alpha-D-glucosamine 6-phosphate + H2O = beta-D-fructose 6-phosphate + NH4(+). The protein operates within amino-sugar metabolism; N-acetylneuraminate degradation; D-fructose 6-phosphate from N-acetylneuraminate: step 5/5. Catalyzes the reversible isomerization-deamination of glucosamine 6-phosphate (GlcN6P) to form fructose 6-phosphate (Fru6P) and ammonium ion. This Thermoanaerobacter sp. (strain X514) protein is Glucosamine-6-phosphate deaminase.